A 466-amino-acid polypeptide reads, in one-letter code: Ribulose bisphosphate carboxylase/oxygenase activase, chloroplastic (466 aa).

A chloroplast-targeting transit peptide spans 1–48; it reads MAAAFSSTVGAPASTPTNFLGKKLKKQVTSAVNYHGKSSNINRFKVMA. 156 to 163 is an ATP binding site; sequence GGKGQGKS. The tract at residues 429 to 454 is disordered; sequence QGAQQAGNLPVPEGCTDPVAKNFDPT.

The protein belongs to the RuBisCO activase family.

Its subcellular location is the plastid. The protein localises to the chloroplast stroma. Functionally, activation of RuBisCO (ribulose-1,5-bisphosphate carboxylase/oxygenase; EC 4.1.1.39) involves the ATP-dependent carboxylation of the epsilon-amino group of lysine leading to a carbamate structure. The chain is Ribulose bisphosphate carboxylase/oxygenase activase, chloroplastic (RCA) from Oryza sativa subsp. japonica (Rice).